Consider the following 330-residue polypeptide: Putative zinc finger protein CONSTANS-LIKE 11 (330 aa).

Zn(2+) is bound by residues C5, C8, C28, and H33. The segment at C5–L47 adopts a B box-type 1; atypical zinc-finger fold. A B box-type 2; degenerate zinc finger spans residues C48–L88. In terms of domain architecture, CCT spans R276–S318.

Belongs to the CONSTANS family.

The protein resides in the nucleus. This chain is Putative zinc finger protein CONSTANS-LIKE 11 (COL11), found in Arabidopsis thaliana (Mouse-ear cress).